Reading from the N-terminus, the 345-residue chain is Nuclear distribution protein nudE-like 1 (345 aa).

Residues 27–190 adopt a coiled-coil conformation; that stretch reads KQTFQEARDE…LAVRERQQEV (164 aa). The tract at residues 56 to 166 is self-association; it reads VQAEQRNRDL…LDEKESLLVS (111 aa). The tract at residues 64–189 is interaction with KATNB1; the sequence is DLQADNQRLK…ELAVRERQQE (126 aa). The tract at residues 114–133 is required for interaction with PAFAH1B1; the sequence is YVRELEQANDDLERAKRATI. The segment at 175–345 is interaction with CENPF; it reads RDLRQELAVR…SAPGMLPLSV (171 aa). An interaction with YWHAE region spans residues 189–256; it reads EVTRKSAPSS…SARISALNIV (68 aa). The interaction with NEFL stretch occupies residues 191–345; the sequence is TRKSAPSSPT…SAPGMLPLSV (155 aa). The tract at residues 195-256 is interaction with KATNA1; it reads APSSPTLDCE…SARISALNIV (62 aa). Ser-215 carries the post-translational modification Phosphoserine. Residues 217–240 are disordered; the sequence is PATPVGKGTENSFPSPKAIPNGFG. Thr-219 carries the phosphothreonine; by CDK1 and MAPK1 modification. The tract at residues 227–278 is interaction with DISC1; sequence NSFPSPKAIPNGFGTSPLTPSARISALNIVGDLLRKVGALESKLAACRNFAK. Ser-231 carries the post-translational modification Phosphoserine. A Phosphoserine; by CDK1 modification is found at Ser-242. Thr-245 is subject to Phosphothreonine; by CDK1 and MAPK1. The tract at residues 256 to 291 is required for localization to the centrosome and interaction with dynein, dynactin, tubulin gamma, PCM1 and PCNT; it reads VGDLLRKVGALESKLAACRNFAKDQASRKSYISGNV. A lipid anchor (S-palmitoyl cysteine; by ZDHHC2, ZDHHC3 and ZDHHC7) is attached at Cys-273. The tract at residues 316-345 is disordered; the sequence is AVNGFDPAPPPPGLGSSRPLSAPGMLPLSV. A compositionally biased stretch (low complexity) spans 329–339; it reads LGSSRPLSAPG. Ser-344 carries the phosphoserine modification.

Belongs to the nudE family. In terms of assembly, self-associates. Interacts with DISC1, dynein, dynactin, tubulin gamma, KATNA1, KATNB1, microtubules, PAFAH1B1, PCM1, PCNT, and YWHAE. Interacts directly with NEFL and indirectly with NEFH. Interacts (via C-terminus) with CENPF. Interacts with ZNF365. Interacts with PLEKHM1 (via N- and C-terminus). Interacts with GTP-bound RAB9A; the interaction may lead to RAB9A-dynein motor tethering. In terms of processing, phosphorylated in mitosis. Can be phosphorylated by CDK1, CDK5 and MAPK1. Phosphorylation by CDK5 promotes interaction with KATNA1 and YWHAE. Palmitoylation at Cys-273 reduces affinity for dynein. As to expression, expressed at low levels in heart, hypothalamus, liver, lung, spleen and stomach. Expressed at higher levels in testis and brain. Within the brain, expressed in cerebellum, cerebral stem, cortex and striatum.

Its subcellular location is the cytoplasm. It is found in the cytoskeleton. The protein localises to the microtubule organizing center. It localises to the centrosome. The protein resides in the chromosome. Its subcellular location is the centromere. It is found in the kinetochore. The protein localises to the spindle. Required for organization of the cellular microtubule array and microtubule anchoring at the centrosome. May regulate microtubule organization at least in part by targeting the microtubule severing protein KATNA1 to the centrosome. Also positively regulates the activity of the minus-end directed microtubule motor protein dynein. May enhance dynein-mediated microtubule sliding by targeting dynein to the microtubule plus ends. Required for several dynein- and microtubule-dependent processes such as the maintenance of Golgi integrity, the centripetal motion of secretory vesicles and the coupling of the nucleus and centrosome. Also required during brain development for the migration of newly formed neurons from the ventricular/subventricular zone toward the cortical plate. Plays a role, together with DISC1, in the regulation of neurite outgrowth. Required for mitosis in some cell types but appears to be dispensible for mitosis in cortical neuronal progenitors, which instead requires NDE1. Facilitates the polymerization of neurofilaments from the individual subunits NEFH and NEFL. Positively regulates lysosome peripheral distribution and ruffled border formation in osteoclasts. Plays a role, together with DISC1, in the regulation of neurite outgrowth. May act as a RAB9A/B effector that tethers RAB9-associated late endosomes to the dynein motor for their retrograde transport to the trans-Golgi network. In Oryctolagus cuniculus (Rabbit), this protein is Nuclear distribution protein nudE-like 1 (NDEL1).